Consider the following 206-residue polypeptide: RNA-binding protein (206 aa).

Residues 87 to 206 (PRGMQRGNRR…SGAKSKRRPR (120 aa)) form a disordered region. Positions 109–132 (MPKDDSNDRKKAKTSKDRKVEKSS) are enriched in basic and acidic residues.

This sequence belongs to the phytoreovirus RNA-binding protein family.

The protein localises to the host cytoplasm. In terms of biological role, constituent of viral factories. Binds to ssRNA and dsRNA. This is RNA-binding protein from Rice gall dwarf virus (RGDV).